A 341-amino-acid chain; its full sequence is Ketol-acid reductoisomerase (NADP(+)) (341 aa).

The 182-residue stretch at 1 to 182 folds into the KARI N-terminal Rossmann domain; sequence MTELFYDDDA…GGTRAGVIKT (182 aa). NADP(+)-binding positions include 25 to 28, serine 51, serine 53, and 83 to 86; these read YGSQ and DQVQ. The active site involves histidine 108. Glycine 134 is a binding site for NADP(+). In terms of domain architecture, KARI C-terminal knotted spans 183–328; the sequence is TFTEETETDL…RELRKLFSWI (146 aa). Residues aspartate 191, glutamate 195, glutamate 227, and glutamate 231 each contribute to the Mg(2+) site. Serine 252 contributes to the substrate binding site.

The protein belongs to the ketol-acid reductoisomerase family. The cofactor is Mg(2+).

The catalysed reaction is (2R)-2,3-dihydroxy-3-methylbutanoate + NADP(+) = (2S)-2-acetolactate + NADPH + H(+). The enzyme catalyses (2R,3R)-2,3-dihydroxy-3-methylpentanoate + NADP(+) = (S)-2-ethyl-2-hydroxy-3-oxobutanoate + NADPH + H(+). It functions in the pathway amino-acid biosynthesis; L-isoleucine biosynthesis; L-isoleucine from 2-oxobutanoate: step 2/4. Its pathway is amino-acid biosynthesis; L-valine biosynthesis; L-valine from pyruvate: step 2/4. Functionally, involved in the biosynthesis of branched-chain amino acids (BCAA). Catalyzes an alkyl-migration followed by a ketol-acid reduction of (S)-2-acetolactate (S2AL) to yield (R)-2,3-dihydroxy-isovalerate. In the isomerase reaction, S2AL is rearranged via a Mg-dependent methyl migration to produce 3-hydroxy-3-methyl-2-ketobutyrate (HMKB). In the reductase reaction, this 2-ketoacid undergoes a metal-dependent reduction by NADPH to yield (R)-2,3-dihydroxy-isovalerate. This chain is Ketol-acid reductoisomerase (NADP(+)), found in Renibacterium salmoninarum (strain ATCC 33209 / DSM 20767 / JCM 11484 / NBRC 15589 / NCIMB 2235).